Here is a 657-residue protein sequence, read N- to C-terminus: Protein kinase and PP2C-like domain-containing protein (657 aa).

Positions 32-327 (FSLLSPIAKG…LKIIEKHIAV (296 aa)) constitute a Protein kinase domain. ATP is bound by residues 38–46 (IAKGSESTV) and Lys59. The Proton acceptor; for kinase activity role is filled by Asp156. Residues 390 to 647 (SWGSFATCGR…DNITVIVVFL (258 aa)) form the PPM-type phosphatase domain. The Mn(2+) site is built by Asp426, Gly427, Asp598, and Asp638.

It in the N-terminal section; belongs to the protein kinase superfamily. Ser/Thr protein kinase family. This sequence in the C-terminal section; belongs to the PP2C family. Requires Mg(2+) as cofactor. Mn(2+) serves as cofactor.

It carries out the reaction L-seryl-[protein] + ATP = O-phospho-L-seryl-[protein] + ADP + H(+). The enzyme catalyses L-threonyl-[protein] + ATP = O-phospho-L-threonyl-[protein] + ADP + H(+). It catalyses the reaction O-phospho-L-seryl-[protein] + H2O = L-seryl-[protein] + phosphate. The catalysed reaction is O-phospho-L-threonyl-[protein] + H2O = L-threonyl-[protein] + phosphate. The protein is Protein kinase and PP2C-like domain-containing protein of Oryza sativa subsp. japonica (Rice).